The sequence spans 239 residues: Octanoyltransferase (239 aa).

Residues Asp48–Thr236 enclose the BPL/LPL catalytic domain. Substrate-binding positions include Arg87 to His94, Ala167 to Gly169, and Gly180 to Ser182. Cys198 (acyl-thioester intermediate) is an active-site residue.

This sequence belongs to the LipB family.

The protein localises to the cytoplasm. The enzyme catalyses octanoyl-[ACP] + L-lysyl-[protein] = N(6)-octanoyl-L-lysyl-[protein] + holo-[ACP] + H(+). It participates in protein modification; protein lipoylation via endogenous pathway; protein N(6)-(lipoyl)lysine from octanoyl-[acyl-carrier-protein]: step 1/2. In terms of biological role, catalyzes the transfer of endogenously produced octanoic acid from octanoyl-acyl-carrier-protein onto the lipoyl domains of lipoate-dependent enzymes. Lipoyl-ACP can also act as a substrate although octanoyl-ACP is likely to be the physiological substrate. The polypeptide is Octanoyltransferase (Rhizobium johnstonii (strain DSM 114642 / LMG 32736 / 3841) (Rhizobium leguminosarum bv. viciae)).